The sequence spans 212 residues: Guanylate kinase (212 aa).

The 179-residue stretch at 14-192 (GTALVICAPS…AYDELRATYL (179 aa)) folds into the Guanylate kinase-like domain. Residue 21–28 (APSGTGKT) participates in ATP binding.

It belongs to the guanylate kinase family.

Its subcellular location is the cytoplasm. The catalysed reaction is GMP + ATP = GDP + ADP. Functionally, essential for recycling GMP and indirectly, cGMP. The polypeptide is Guanylate kinase (Lawsonia intracellularis (strain PHE/MN1-00)).